Here is a 224-residue protein sequence, read N- to C-terminus: Claudin-17 (224 aa).

The Cytoplasmic segment spans residues 1-7; that stretch reads MAFYPLQ. Residues 8-28 traverse the membrane as a helical segment; the sequence is IAGLVLGFFGLVGTIGTTLLP. The Extracellular segment spans residues 29-81; the sequence is QWRVSAFIGSNIIIFERIWEGLWMNCIQQAMVTLQCKFYNSILALPPVLEAAR. The chain crosses the membrane as a helical span at residues 82-102; sequence ALMCVAVALALVALIIGICGM. Over 103–124 the chain is Cytoplasmic; sequence KQLQCTGSSERVKAYLLGTSGV. Residues 125–145 form a helical membrane-spanning segment; sequence LFILTGIFVLIPVSWTANIII. The Extracellular portion of the chain corresponds to 146–164; that stretch reads RDFYDPTVHAGQKRELGGA. A helical membrane pass occupies residues 165–185; it reads LFLGWATAAVLFIGGGLLCGY. The Cytoplasmic segment spans residues 186–224; sequence CCCNRKERWHRYPVPAYRVPQKDNQRNVTVPRKSSTSYV.

This sequence belongs to the claudin family. Does not form homotypic polymeric strands and it is not sufficient to form tight junctions by its own. Interacts with OCLN. Expressed at high levels in the kidney and at mucher lower levels in the brain. In the kidney, expression gradually decreases from the proximal tubule downstream to the distal convoluted tubule. Expressed in the thin ascending limb of Henle's loop, as well as in the thick ascending limb of Henle's loop. In the distal convoluted tubules, expressed only in a few tubules. Not detected in the collecting duct. In the brain, expressed in blood vessels (at protein level).

It localises to the cell junction. It is found in the tight junction. The protein localises to the cell membrane. The catalysed reaction is chloride(in) = chloride(out). It carries out the reaction hydrogencarbonate(in) = hydrogencarbonate(out). The enzyme catalyses bromide(in) = bromide(out). It catalyses the reaction iodide(out) = iodide(in). The catalysed reaction is fluoride(in) = fluoride(out). It carries out the reaction nitrate(in) = nitrate(out). The enzyme catalyses thiocyanate(in) = thiocyanate(out). Its function is as follows. Channel-forming tight junction protein with selectivity for anions, including chloride and hydrogencarbonate, and for solutes smaller than 9 Angstrom in diameter. In the kidney proximal tubule, may be involved in quantitative reabsorption of filtered anions. Does not affect water permeability. The sequence is that of Claudin-17 (Cldn17) from Mus musculus (Mouse).